A 1363-amino-acid polypeptide reads, in one-letter code: Vascular endothelial growth factor receptor 3 (1363 aa).

Positions 1–24 (MQPGAALNRRLWLCLGLLQGLANG) are cleaved as a signal peptide. Residues 25–775 (YSMTPPTLNI…EGSEDKGSME (751 aa)) are Extracellular-facing. N-linked (GlcNAc...) asparagine glycans are attached at residues asparagine 33, asparagine 104, asparagine 166, asparagine 251, asparagine 299, and asparagine 411. Ig-like C2-type domains lie at 44-118 (GDSL…YIKA), 151-213 (KDSM…WGDQ), 230-326 (YDIQ…TEVI), 331-415 (PFIS…ISLE), 422-552 (PHIH…FYVT), 555-671 (PDGF…KYLS), and 678-764 (PRLT…ASVA). Cystine bridges form between cysteine 51-cysteine 111 and cysteine 158-cysteine 206. A disulfide bond links cysteine 252 and cysteine 310. Cystine bridges form between cysteine 445–cysteine 534, cysteine 466–cysteine 486, and cysteine 578–cysteine 653. N-linked (GlcNAc...) asparagine glycosylation is found at asparagine 515, asparagine 527, asparagine 582, asparagine 594, and asparagine 683. A disulfide bridge links cysteine 699 with cysteine 751. Asparagine 758 is a glycosylation site (N-linked (GlcNAc...) asparagine). The chain crosses the membrane as a helical span at residues 776-796 (IVILIGTGVIAVFFWVLLLLI). Over 797-1363 (FCNMKRPAHA…GSTFFADSNY (567 aa)) the chain is Cytoplasmic. Residues tyrosine 830 and tyrosine 833 each carry the phosphotyrosine; by SRC modification. A Protein kinase domain is found at 845–1173 (LHLGRVLGHG…DLVEILGDLL (329 aa)). ATP contacts are provided by residues 851-859 (LGHGAFGKV) and lysine 879. The Proton acceptor role is filled by aspartate 1037. Tyrosine 1063 bears the Phosphotyrosine; by autocatalysis and SRC mark. Phosphotyrosine; by autocatalysis is present on residues tyrosine 1068, tyrosine 1230, tyrosine 1231, and tyrosine 1265. Over residues 1289 to 1317 (SRHRQEGSFSRKDPGQHMDISRGHPDLQG) the composition is skewed to basic and acidic residues. Positions 1289-1330 (SRHRQEGSFSRKDPGQHMDISRGHPDLQGRRRRPTQGAQGGK) are disordered. 2 positions are modified to phosphotyrosine; by autocatalysis and SRC: tyrosine 1333 and tyrosine 1337. Tyrosine 1363 bears the Phosphotyrosine; by autocatalysis mark.

It belongs to the protein kinase superfamily. Tyr protein kinase family. CSF-1/PDGF receptor subfamily. In terms of assembly, interacts with VEGFC and VEGFD. Monomer in the absence of bound VEGFC or VEGFD. Homodimer in the presence of bound VEGFC or VEGFD. Can also form a heterodimer with KDR. Interacts with PTPN14; the interaction is enhanced by stimulation with VEGFC. Interacts with CRK, GRB2, PTK2/FAK1, SHC1, PIK3R1 and PTPN11/SHP-2. Identified in a complex with SRC and ITGB1. Identified in a complex with SRC and ITGB1. In terms of processing, autophosphorylated on tyrosine residues upon ligand binding. Autophosphorylation occurs in trans, i.e. one subunit of the dimeric receptor phosphorylates tyrosine residues on the other subunit. Phosphorylation in response to H(2)O(2) is mediated by a process that requires SRC and PRKCD activity. Phosphorylation at Tyr-1068 is required for autophosphorylation at additional tyrosine residues. Phosphorylation at Tyr-1063 and Tyr-1337 is important for interaction with CRK and subsequent activation of MAPK8. Phosphorylation at Tyr-1230, Tyr-1231 and Tyr-1337 is important for interaction with GRB2 and subsequent activation of the AKT1 and MAPK1/ERK2 and/or MAPK3/ERK1 signaling pathways. In response to endothelial cell adhesion onto collagen, can also be phosphorylated in the absence of FLT4 kinase activity by SRC.

The protein resides in the cell membrane. Its subcellular location is the cytoplasm. It is found in the nucleus. The catalysed reaction is L-tyrosyl-[protein] + ATP = O-phospho-L-tyrosyl-[protein] + ADP + H(+). Its activity is regulated as follows. Present in an inactive conformation in the absence of bound ligand. Binding of VEGFC or VEGFD leads to dimerization and activation by autophosphorylation on tyrosine residues. Functionally, tyrosine-protein kinase that acts as a cell-surface receptor for VEGFC and VEGFD, and plays an essential role in adult lymphangiogenesis and in the development of the vascular network and the cardiovascular system during embryonic development. Promotes proliferation, survival and migration of endothelial cells, and regulates angiogenic sprouting. Signaling by activated FLT4 leads to enhanced production of VEGFC, and to a lesser degree VEGFA, thereby creating a positive feedback loop that enhances FLT4 signaling. Modulates KDR signaling by forming heterodimers. Mediates activation of the MAPK1/ERK2, MAPK3/ERK1 signaling pathway, of MAPK8 and the JUN signaling pathway, and of the AKT1 signaling pathway. Phosphorylates SHC1. Mediates phosphorylation of PIK3R1, the regulatory subunit of phosphatidylinositol 3-kinase. Promotes phosphorylation of MAPK8 at 'Thr-183' and 'Tyr-185', and of AKT1 at 'Ser-473'. This is Vascular endothelial growth factor receptor 3 (Flt4) from Rattus norvegicus (Rat).